We begin with the raw amino-acid sequence, 652 residues long: 2-oxoglutarate carboxylase large subunit (652 aa).

In terms of domain architecture, Pyruvate carboxyltransferase spans 26–288 (ILITDLTPRD…DTGIDMKKLD (263 aa)). Substrate contacts are provided by residues 34 to 38 (RDGQQ) and Arg-105. Residue Asp-35 coordinates a divalent metal cation. Residues Lys-196, His-227, and His-229 each coordinate a divalent metal cation. Position 196 is an N6-carboxylysine (Lys-196). Residue Thr-362 participates in substrate binding. The region spanning 563–643 (AEEKGIPKAT…TPDDALLRIK (81 aa)) is the Biotinyl-binding domain. N6-biotinyllysine is present on Lys-609.

Heterohexadecamer of 8 large subunits and 8 small subunits. The cofactor is Mg(2+). Requires Mn(2+) as cofactor. Co(2+) is required as a cofactor. Biotinylated.

The catalysed reaction is hydrogencarbonate + 2-oxoglutarate + ATP = (S)-oxalosuccinate + ADP + phosphate + H(+). The protein is 2-oxoglutarate carboxylase large subunit of Hydrogenobacter thermophilus (strain DSM 6534 / IAM 12695 / TK-6).